The sequence spans 116 residues: MARVKRGNVARKRRKKILKLAKGYRAGHSKLFRTANQVVMKALCNAYRDRRRRKRDFRRLWIARINAAARQYGMSYSQLMGALKKADIQLNRKMLAQLAVLDAPAFATVIQTARAL.

The protein belongs to the bacterial ribosomal protein bL20 family.

Binds directly to 23S ribosomal RNA and is necessary for the in vitro assembly process of the 50S ribosomal subunit. It is not involved in the protein synthesizing functions of that subunit. The chain is Large ribosomal subunit protein bL20 from Thermosynechococcus vestitus (strain NIES-2133 / IAM M-273 / BP-1).